A 126-amino-acid polypeptide reads, in one-letter code: MSNVPSELKYVASHEWLRLEDDGTVTVGITDHAQEALGDIVYVELPDVGDTVAVDDEVAVVESVKAASDVYAPLTGEVVAINEALEDDPEVINTDPYGEGWMYRIKPDNADDFESLLSAEEYQAEL.

Residues 24 to 106 (TVTVGITDHA…YGEGWMYRIK (83 aa)) form the Lipoyl-binding domain. At K65 the chain carries N6-lipoyllysine.

It belongs to the GcvH family. In terms of assembly, the glycine cleavage system is composed of four proteins: P, T, L and H. The cofactor is (R)-lipoate.

Its function is as follows. The glycine cleavage system catalyzes the degradation of glycine. The H protein shuttles the methylamine group of glycine from the P protein to the T protein. This is Glycine cleavage system H protein from Psychrobacter sp. (strain PRwf-1).